Consider the following 103-residue polypeptide: Large ribosomal subunit protein uL24 (103 aa).

Belongs to the universal ribosomal protein uL24 family. As to quaternary structure, part of the 50S ribosomal subunit.

Its function is as follows. One of two assembly initiator proteins, it binds directly to the 5'-end of the 23S rRNA, where it nucleates assembly of the 50S subunit. In terms of biological role, one of the proteins that surrounds the polypeptide exit tunnel on the outside of the subunit. This is Large ribosomal subunit protein uL24 from Histophilus somni (strain 129Pt) (Haemophilus somnus).